Reading from the N-terminus, the 158-residue chain is UPF0311 protein CA_C3321 (158 aa).

Belongs to the UPF0311 family.

The polypeptide is UPF0311 protein CA_C3321 (Clostridium acetobutylicum (strain ATCC 824 / DSM 792 / JCM 1419 / IAM 19013 / LMG 5710 / NBRC 13948 / NRRL B-527 / VKM B-1787 / 2291 / W)).